The chain runs to 202 residues: Transcriptional regulator GfcR 2 (202 aa).

This sequence belongs to the purine/pyrimidine phosphoribosyltransferase family. GfcR subfamily.

The polypeptide is Transcriptional regulator GfcR 2 (Methanosarcina barkeri (strain Fusaro / DSM 804)).